The following is a 112-amino-acid chain: Small ribosomal subunit protein bS6 (112 aa).

This sequence belongs to the bacterial ribosomal protein bS6 family.

Functionally, binds together with bS18 to 16S ribosomal RNA. This is Small ribosomal subunit protein bS6 from Chlamydia trachomatis serovar L2 (strain ATCC VR-902B / DSM 19102 / 434/Bu).